The chain runs to 457 residues: Bifunctional protein GlmU (457 aa).

Residues 1-230 are pyrophosphorylase; sequence MSKRYAVVLA…FEESLGVNDR (230 aa). Residues 9–12, Lys-23, Gln-73, and 78–79 each bind UDP-N-acetyl-alpha-D-glucosamine; these read LAAG and GT. Asp-103 provides a ligand contact to Mg(2+). Gly-140, Glu-155, Asn-170, and Asn-228 together coordinate UDP-N-acetyl-alpha-D-glucosamine. Residue Asn-228 participates in Mg(2+) binding. The linker stretch occupies residues 231 to 251; it reads IALAEASKLMQRRINENHMRN. Residues 252–457 form an N-acetyltransferase region; sequence GVTLVNPEST…GYAKHLNHGK (206 aa). Residues Arg-333 and Lys-351 each coordinate UDP-N-acetyl-alpha-D-glucosamine. The active-site Proton acceptor is His-363. Residues Tyr-366 and Asn-377 each coordinate UDP-N-acetyl-alpha-D-glucosamine. Acetyl-CoA-binding positions include 386 to 387, Ala-423, and Arg-440; that span reads NY.

The protein in the N-terminal section; belongs to the N-acetylglucosamine-1-phosphate uridyltransferase family. In the C-terminal section; belongs to the transferase hexapeptide repeat family. Homotrimer. Mg(2+) serves as cofactor.

The protein localises to the cytoplasm. It carries out the reaction alpha-D-glucosamine 1-phosphate + acetyl-CoA = N-acetyl-alpha-D-glucosamine 1-phosphate + CoA + H(+). The catalysed reaction is N-acetyl-alpha-D-glucosamine 1-phosphate + UTP + H(+) = UDP-N-acetyl-alpha-D-glucosamine + diphosphate. The protein operates within nucleotide-sugar biosynthesis; UDP-N-acetyl-alpha-D-glucosamine biosynthesis; N-acetyl-alpha-D-glucosamine 1-phosphate from alpha-D-glucosamine 6-phosphate (route II): step 2/2. It functions in the pathway nucleotide-sugar biosynthesis; UDP-N-acetyl-alpha-D-glucosamine biosynthesis; UDP-N-acetyl-alpha-D-glucosamine from N-acetyl-alpha-D-glucosamine 1-phosphate: step 1/1. It participates in bacterial outer membrane biogenesis; LPS lipid A biosynthesis. Its function is as follows. Catalyzes the last two sequential reactions in the de novo biosynthetic pathway for UDP-N-acetylglucosamine (UDP-GlcNAc). The C-terminal domain catalyzes the transfer of acetyl group from acetyl coenzyme A to glucosamine-1-phosphate (GlcN-1-P) to produce N-acetylglucosamine-1-phosphate (GlcNAc-1-P), which is converted into UDP-GlcNAc by the transfer of uridine 5-monophosphate (from uridine 5-triphosphate), a reaction catalyzed by the N-terminal domain. The chain is Bifunctional protein GlmU from Listeria monocytogenes serotype 4a (strain HCC23).